We begin with the raw amino-acid sequence, 137 residues long: Proofreading thioesterase EntH (137 aa).

Catalysis depends on glutamate 63, which acts as the Nucleophile or proton acceptor.

It belongs to the thioesterase PaaI family. As to quaternary structure, homotetramer. Dimer of dimers. Interacts specifically with the aryl carrier protein (ArCP) domain of EntB.

Its subcellular location is the cytoplasm. It participates in siderophore biosynthesis; enterobactin biosynthesis. Its function is as follows. Required for optimal enterobactin synthesis. Acts as a proofreading enzyme that prevents EntB misacylation by hydrolyzing the thioester bound existing between EntB and wrongly charged molecules. This Citrobacter koseri (strain ATCC BAA-895 / CDC 4225-83 / SGSC4696) protein is Proofreading thioesterase EntH.